The primary structure comprises 421 residues: Cytochrome c biogenesis protein Ccs1 (421 aa).

A run of 3 helical transmembrane segments spans residues 12 to 32 (LRFA…GTVI), 71 to 91 (TWWF…CTLL), and 157 to 177 (IAPI…IIGS).

It belongs to the Ccs1/CcsB family. May interact with CcsA.

It is found in the plastid. The protein localises to the chloroplast thylakoid membrane. Functionally, required during biogenesis of c-type cytochromes (cytochrome c6 and cytochrome f) at the step of heme attachment. This chain is Cytochrome c biogenesis protein Ccs1, found in Thalassiosira pseudonana (Marine diatom).